The following is a 349-amino-acid chain: 4-hydroxy-3-methylbut-2-en-1-yl diphosphate synthase (flavodoxin) (349 aa).

Residues Cys-264, Cys-267, Cys-299, and Glu-306 each coordinate [4Fe-4S] cluster.

Belongs to the IspG family. It depends on [4Fe-4S] cluster as a cofactor.

It carries out the reaction (2E)-4-hydroxy-3-methylbut-2-enyl diphosphate + oxidized [flavodoxin] + H2O + 2 H(+) = 2-C-methyl-D-erythritol 2,4-cyclic diphosphate + reduced [flavodoxin]. It participates in isoprenoid biosynthesis; isopentenyl diphosphate biosynthesis via DXP pathway; isopentenyl diphosphate from 1-deoxy-D-xylulose 5-phosphate: step 5/6. In terms of biological role, converts 2C-methyl-D-erythritol 2,4-cyclodiphosphate (ME-2,4cPP) into 1-hydroxy-2-methyl-2-(E)-butenyl 4-diphosphate. The sequence is that of 4-hydroxy-3-methylbut-2-en-1-yl diphosphate synthase (flavodoxin) from Clostridium tetani (strain Massachusetts / E88).